The following is a 592-amino-acid chain: Peroxisomal targeting signal receptor (592 aa).

A Glycyl cysteine thioester (Cys-Gly) (interchain with G-Cter in ubiquitin) cross-link involves residue Cys10. The amphipathic helix 1 (AH1) stretch occupies residues 11-33 (SVNGNAVAQFNKHTQQDRSLQQQ). Residue Lys22 forms a Glycyl lysine isopeptide (Lys-Gly) (interchain with G-Cter in ubiquitin) linkage. Residues 22-46 (KHTQQDRSLQQQVANQHGNVAQNQG) are compositionally biased toward polar residues. A disordered region spans residues 22–49 (KHTQQDRSLQQQVANQHGNVAQNQGFKK). An amphipathic helix 2 (AH2) region spans residues 58 to 76 (RANLDQFMNNGAPQNSFQF). 3 short sequence motifs (wxxxF/Y motif) span residues 100–104 (WSQDF), 128–132 (WASEF), and 185–189 (WENQF). Residues 223-239 (FQEVWDSLNSESFENDF) form an amphipathic helix 4 (AH4) region. Residues 262-266 (WEKDF) carry the WxxxF/Y motif 4 motif. TPR repeat units lie at residues 295-329 (DQDP…DENH), 330-363 (VDAW…HPEN), 440-473 (ADVQ…RPDD), 475-507 (ILWN…KPTF), and 509-541 (RARY…HQVE).

This sequence belongs to the peroxisomal targeting signal receptor family. As to quaternary structure, interacts (via WxxxF/Y and LVxEF motifs) with PEX14; promoting translocation through the PEX13-PEX14 docking complex. In terms of processing, monoubiquitinated at Cys-10 by PEX2 during PEX5 passage through the retrotranslocation channel: monoubiquitination acts as a signal for PEX5 extraction and is required for proper export from peroxisomes and recycling. When PEX5 recycling is compromised, polyubiquitinated at Lys-22 by PEX10 during its passage through the retrotranslocation channel, leading to its degradation.

It localises to the cytoplasm. Its subcellular location is the cytosol. The protein resides in the peroxisome matrix. Receptor that mediates peroxisomal import of proteins containing a C-terminal PTS1-type tripeptide peroxisomal targeting signal (SKL-type). Binds to cargo proteins containing a PTS1 peroxisomal targeting signal in the cytosol, and translocates them into the peroxisome matrix by passing through the PEX13-PEX14 docking complex along with cargo proteins. PEX5 receptor is then retrotranslocated into the cytosol, leading to release of bound cargo in the peroxisome matrix, and reset for a subsequent peroxisome import cycle. The protein is Peroxisomal targeting signal receptor (PEX5) of Candida albicans (strain SC5314 / ATCC MYA-2876) (Yeast).